Here is a 247-residue protein sequence, read N- to C-terminus: Homeobox-leucine zipper protein HOX17 (247 aa).

Residues 58-81 (ERAGLRGGGGSDEEDGGCGIDGSR) form a disordered region. The segment at residues 79 to 138 (GSRKKLRLSKDQSAVLEDSFREHPTLNPRQKATLAQQLGLRPRQVEVWFQNRRARTKLKQ) is a DNA-binding region (homeobox). Positions 137–182 (KQTEVDCEFLKRCCETLTEENRRLQKEVQELRALKLVSPHLYMNMS) are leucine-zipper.

The protein belongs to the HD-ZIP homeobox family. Class II subfamily. As to expression, expressed in seedlings, roots, stems, leaf sheaths and blades and panicles.

It is found in the nucleus. In terms of biological role, probable transcription factor. The chain is Homeobox-leucine zipper protein HOX17 (HOX17) from Oryza sativa subsp. japonica (Rice).